Here is a 324-residue protein sequence, read N- to C-terminus: Protoheme IX farnesyltransferase 2 (324 aa).

The next 9 membrane-spanning stretches (helical) occupy residues 39–59 (LIKPRVIELLLVTTIPAMLLA), 63–83 (IPSPWLVIATLVGGTMAAGSA), 115–135 (HALVFGIALGAGSFGWLWATT), 137–157 (LLSAVLAVATILFYVFVYTLV), 166–186 (IVWGGAAGCMPVVIGWAGVTG), 192–212 (ALVMFGIIFFWTPPHTWSLAM), 239–259 (IVVFTWLMVLWTLLLAPATGW), 260–280 (LYTAFAIAAGAWFLVLAHRLH), and 302–322 (LMIVCVALAVDSALSLPVLGW).

Belongs to the UbiA prenyltransferase family. Protoheme IX farnesyltransferase subfamily.

The protein resides in the cell membrane. It catalyses the reaction heme b + (2E,6E)-farnesyl diphosphate + H2O = Fe(II)-heme o + diphosphate. It functions in the pathway porphyrin-containing compound metabolism; heme O biosynthesis; heme O from protoheme: step 1/1. In terms of biological role, converts heme B (protoheme IX) to heme O by substitution of the vinyl group on carbon 2 of heme B porphyrin ring with a hydroxyethyl farnesyl side group. The protein is Protoheme IX farnesyltransferase 2 of Saccharopolyspora erythraea (strain ATCC 11635 / DSM 40517 / JCM 4748 / NBRC 13426 / NCIMB 8594 / NRRL 2338).